Consider the following 284-residue polypeptide: MTKPDLASLEKTIDKAFDERDGINTATRGEVREAVEQSLVLLDRGEARVAEKQADGNWQVNQWLKKAVLLSFRLNPMEVIKGGPGQSSWWDKVPSKFDGWTANEFEKAGFRAVPNCIVRHSAYIAPNAILMPSFVNLGAYVDEGTMVDTWATVGSCAQIGKNVHLSGGVGIGGVLEPMQAGPTIIEDNCFIGARSEVVEGCIVREGSVLGMGVFIGKSTKIVDRATGEVFYGEVPPYSVVVAGTMPGKNVPGENWGPSLYCAVIVKRVDEKTRSKTSINELLRD.

Residues arginine 111 and aspartate 148 each contribute to the substrate site.

This sequence belongs to the transferase hexapeptide repeat family. In terms of assembly, homotrimer.

The protein resides in the cytoplasm. It carries out the reaction (S)-2,3,4,5-tetrahydrodipicolinate + succinyl-CoA + H2O = (S)-2-succinylamino-6-oxoheptanedioate + CoA. It participates in amino-acid biosynthesis; L-lysine biosynthesis via DAP pathway; LL-2,6-diaminopimelate from (S)-tetrahydrodipicolinate (succinylase route): step 1/3. The polypeptide is 2,3,4,5-tetrahydropyridine-2,6-dicarboxylate N-succinyltransferase (Brucella anthropi (strain ATCC 49188 / DSM 6882 / CCUG 24695 / JCM 21032 / LMG 3331 / NBRC 15819 / NCTC 12168 / Alc 37) (Ochrobactrum anthropi)).